The sequence spans 390 residues: Alanine racemase (390 aa).

The Proton acceptor; specific for D-alanine role is filled by lysine 37. Lysine 37 is modified (N6-(pyridoxal phosphate)lysine). Position 135 (arginine 135) interacts with substrate. Tyrosine 274 acts as the Proton acceptor; specific for L-alanine in catalysis. Methionine 322 lines the substrate pocket.

The protein belongs to the alanine racemase family. Pyridoxal 5'-phosphate is required as a cofactor.

It catalyses the reaction L-alanine = D-alanine. It functions in the pathway amino-acid biosynthesis; D-alanine biosynthesis; D-alanine from L-alanine: step 1/1. Catalyzes the interconversion of L-alanine and D-alanine. May also act on other amino acids. The sequence is that of Alanine racemase (alr) from Desulfosudis oleivorans (strain DSM 6200 / JCM 39069 / Hxd3) (Desulfococcus oleovorans).